Consider the following 477-residue polypeptide: Glycogen synthase (477 aa).

Position 15 (K15) interacts with ADP-alpha-D-glucose.

This sequence belongs to the glycosyltransferase 1 family. Bacterial/plant glycogen synthase subfamily.

The catalysed reaction is [(1-&gt;4)-alpha-D-glucosyl](n) + ADP-alpha-D-glucose = [(1-&gt;4)-alpha-D-glucosyl](n+1) + ADP + H(+). The protein operates within glycan biosynthesis; glycogen biosynthesis. Functionally, synthesizes alpha-1,4-glucan chains using ADP-glucose. The protein is Glycogen synthase of Klebsiella pneumoniae (strain 342).